A 126-amino-acid polypeptide reads, in one-letter code: Protein ApaG (126 aa).

The ApaG domain occupies 2 to 126; it reads DVIQPCIKIQ…FRLAIPNVLN (125 aa).

This is Protein ApaG from Vibrio campbellii (strain ATCC BAA-1116).